The sequence spans 179 residues: Large ribosomal subunit protein uL5 (179 aa).

It belongs to the universal ribosomal protein uL5 family. In terms of assembly, part of the 50S ribosomal subunit; part of the 5S rRNA/L5/L18/L25 subcomplex. Contacts the 5S rRNA and the P site tRNA. Forms a bridge to the 30S subunit in the 70S ribosome.

In terms of biological role, this is one of the proteins that bind and probably mediate the attachment of the 5S RNA into the large ribosomal subunit, where it forms part of the central protuberance. In the 70S ribosome it contacts protein S13 of the 30S subunit (bridge B1b), connecting the 2 subunits; this bridge is implicated in subunit movement. Contacts the P site tRNA; the 5S rRNA and some of its associated proteins might help stabilize positioning of ribosome-bound tRNAs. This chain is Large ribosomal subunit protein uL5, found in Pelobacter propionicus (strain DSM 2379 / NBRC 103807 / OttBd1).